A 412-amino-acid chain; its full sequence is Serine hydroxymethyltransferase (412 aa).

Residues Leu-117 and 121–123 (GHL) each bind (6S)-5,6,7,8-tetrahydrofolate. Lys-226 carries the post-translational modification N6-(pyridoxal phosphate)lysine.

It belongs to the SHMT family. As to quaternary structure, homodimer. Requires pyridoxal 5'-phosphate as cofactor.

It is found in the cytoplasm. The enzyme catalyses (6R)-5,10-methylene-5,6,7,8-tetrahydrofolate + glycine + H2O = (6S)-5,6,7,8-tetrahydrofolate + L-serine. Its pathway is one-carbon metabolism; tetrahydrofolate interconversion. It functions in the pathway amino-acid biosynthesis; glycine biosynthesis; glycine from L-serine: step 1/1. Catalyzes the reversible interconversion of serine and glycine with tetrahydrofolate (THF) serving as the one-carbon carrier. This reaction serves as the major source of one-carbon groups required for the biosynthesis of purines, thymidylate, methionine, and other important biomolecules. Also exhibits THF-independent aldolase activity toward beta-hydroxyamino acids, producing glycine and aldehydes, via a retro-aldol mechanism. In Staphylococcus aureus (strain bovine RF122 / ET3-1), this protein is Serine hydroxymethyltransferase.